The primary structure comprises 53 residues: Mannose/glucose-specific lectin alpha chain (53 aa).

This sequence belongs to the leguminous lectin family. In terms of assembly, heterodimer of an alpha and a beta chain.

In terms of biological role, this lectin specifically binds mannose and glucose. The polypeptide is Mannose/glucose-specific lectin alpha chain (Vicia cracca (Bird vetch)).